The following is an 80-amino-acid chain: UPF0291 protein llmg_1475 (80 aa).

This sequence belongs to the UPF0291 family.

It is found in the cytoplasm. This Lactococcus lactis subsp. cremoris (strain MG1363) protein is UPF0291 protein llmg_1475.